The primary structure comprises 209 residues: Thiamine-phosphate synthase (209 aa).

Residues 35 to 39 (QYRDK) and asparagine 67 contribute to the 4-amino-2-methyl-5-(diphosphooxymethyl)pyrimidine site. 2 residues coordinate Mg(2+): aspartate 68 and aspartate 86. Threonine 105 contacts 4-amino-2-methyl-5-(diphosphooxymethyl)pyrimidine. 132-134 (SNT) is a 2-[(2R,5Z)-2-carboxy-4-methylthiazol-5(2H)-ylidene]ethyl phosphate binding site. Residue lysine 135 coordinates 4-amino-2-methyl-5-(diphosphooxymethyl)pyrimidine. 2-[(2R,5Z)-2-carboxy-4-methylthiazol-5(2H)-ylidene]ethyl phosphate is bound at residue glycine 162.

It belongs to the thiamine-phosphate synthase family. Requires Mg(2+) as cofactor.

It catalyses the reaction 2-[(2R,5Z)-2-carboxy-4-methylthiazol-5(2H)-ylidene]ethyl phosphate + 4-amino-2-methyl-5-(diphosphooxymethyl)pyrimidine + 2 H(+) = thiamine phosphate + CO2 + diphosphate. It carries out the reaction 2-(2-carboxy-4-methylthiazol-5-yl)ethyl phosphate + 4-amino-2-methyl-5-(diphosphooxymethyl)pyrimidine + 2 H(+) = thiamine phosphate + CO2 + diphosphate. The catalysed reaction is 4-methyl-5-(2-phosphooxyethyl)-thiazole + 4-amino-2-methyl-5-(diphosphooxymethyl)pyrimidine + H(+) = thiamine phosphate + diphosphate. It functions in the pathway cofactor biosynthesis; thiamine diphosphate biosynthesis; thiamine phosphate from 4-amino-2-methyl-5-diphosphomethylpyrimidine and 4-methyl-5-(2-phosphoethyl)-thiazole: step 1/1. Its function is as follows. Condenses 4-methyl-5-(beta-hydroxyethyl)thiazole monophosphate (THZ-P) and 2-methyl-4-amino-5-hydroxymethyl pyrimidine pyrophosphate (HMP-PP) to form thiamine monophosphate (TMP). This is Thiamine-phosphate synthase from Pseudomonas fluorescens (strain SBW25).